The chain runs to 905 residues: Stonin-2 (905 aa).

3 disordered regions span residues 1-121 (MTTL…HQET), 178-205 (EQTS…VEME), and 244-263 (LPPV…SVIP). Over residues 40–50 (SSSPDQSESSS) the composition is skewed to low complexity. Residues 60 to 73 (SQDHSHSEQDDSSE) are compositionally biased toward basic and acidic residues. Pro residues predominate over residues 85 to 94 (PGSPEQPPPD). Over residues 178 to 196 (EQTSGQASGADSTDNSSSL) the composition is skewed to polar residues. Pro residues predominate over residues 244 to 256 (LPPVTSPLKPNTP). A Phosphothreonine modification is found at T255. 3 positions are modified to phosphoserine: S281, S287, and S302. 2 short sequence motifs (NPF) span residues 313 to 315 (NPF) and 329 to 331 (NPF). The 134-residue stretch at 427 to 560 (GWPMMLRIPE…DLPVLSMDLS (134 aa)) folds into the SHD domain. An MHD domain is found at 568-878 (EEEITVDVRD…SYQVALGSIW (311 aa)). S762 carries the post-translational modification Phosphoserine.

This sequence belongs to the Stoned B family. Interacts with the second C2 domain of synaptotagmins SYT1 and SYT2. Interacts with EPS15, EPS15R and ITSN1. Interacts indirectly with the AP-2 adapter complex. Interacts with TOR1A and COPS4; the interaction controls STON2 protein stability. Phosphorylated in vitro by PKD. In terms of processing, neddylated; deneddylated via its interaction with the COP9 signalosome (CSN) complex through TOR1A and COPS4. Post-translationally, ubiquitinated; leading to its degradation. Ubiquitous.

The protein resides in the cytoplasm. It is found in the membrane. The protein localises to the synapse. Its subcellular location is the synaptosome. Adapter protein involved in endocytic machinery. Involved in the synaptic vesicle recycling. May facilitate clathrin-coated vesicle uncoating. This chain is Stonin-2 (STON2), found in Homo sapiens (Human).